Consider the following 522-residue polypeptide: Hydroxymethylglutaryl-CoA synthase, cytoplasmic (522 aa).

(3S)-3-hydroxy-3-methylglutaryl-CoA-binding residues include Asp43 and Ala44. Glu95 (proton donor/acceptor) is an active-site residue. (3S)-3-hydroxy-3-methylglutaryl-CoA is bound by residues Cys129, Asn167, Thr171, Ser221, His264, Lys273, Asn344, and Ser378. The active-site Acyl-thioester intermediate is Cys129. The active-site Proton donor/acceptor is the His264.

It belongs to the thiolase-like superfamily. HMG-CoA synthase family. Homodimer.

It localises to the cytoplasm. The catalysed reaction is acetoacetyl-CoA + acetyl-CoA + H2O = (3S)-3-hydroxy-3-methylglutaryl-CoA + CoA + H(+). It functions in the pathway metabolic intermediate biosynthesis; (R)-mevalonate biosynthesis; (R)-mevalonate from acetyl-CoA: step 2/3. Catalyzes the condensation of acetyl-CoA with acetoacetyl-CoA to form HMG-CoA, which is converted by HMG-CoA reductase (HMGCR) into mevalonate, a precursor for cholesterol synthesis. The polypeptide is Hydroxymethylglutaryl-CoA synthase, cytoplasmic (HMGCS1) (Gallus gallus (Chicken)).